Consider the following 228-residue polypeptide: Ribose-5-phosphate isomerase A (228 aa).

Substrate is bound by residues 29–32 (TGST), 85–88 (DGAD), and 98–101 (KGGG). Glutamate 107 functions as the Proton acceptor in the catalytic mechanism. Lysine 125 contributes to the substrate binding site.

This sequence belongs to the ribose 5-phosphate isomerase family. As to quaternary structure, homodimer.

The enzyme catalyses aldehydo-D-ribose 5-phosphate = D-ribulose 5-phosphate. The protein operates within carbohydrate degradation; pentose phosphate pathway; D-ribose 5-phosphate from D-ribulose 5-phosphate (non-oxidative stage): step 1/1. Functionally, catalyzes the reversible conversion of ribose-5-phosphate to ribulose 5-phosphate. This is Ribose-5-phosphate isomerase A from Staphylococcus aureus (strain Mu50 / ATCC 700699).